The sequence spans 377 residues: Chaperone protein DnaJ (377 aa).

A J domain is found at 5–70 (DYYQILGIPK…EKRSAYDQYG (66 aa)). Residues 132 to 210 (GIKKEIQIPT…CHGQGRVETY (79 aa)) form a CR-type zinc finger. Residues Cys145, Cys148, Cys162, Cys165, Cys184, Cys187, Cys198, and Cys201 each contribute to the Zn(2+) site. CXXCXGXG motif repeat units lie at residues 145-152 (CKTCYGSG), 162-169 (CSTCHGKG), 184-191 (CPTCHGKG), and 198-205 (CNLCHGQG).

This sequence belongs to the DnaJ family. Homodimer. Zn(2+) is required as a cofactor.

Its subcellular location is the cytoplasm. Participates actively in the response to hyperosmotic and heat shock by preventing the aggregation of stress-denatured proteins and by disaggregating proteins, also in an autonomous, DnaK-independent fashion. Unfolded proteins bind initially to DnaJ; upon interaction with the DnaJ-bound protein, DnaK hydrolyzes its bound ATP, resulting in the formation of a stable complex. GrpE releases ADP from DnaK; ATP binding to DnaK triggers the release of the substrate protein, thus completing the reaction cycle. Several rounds of ATP-dependent interactions between DnaJ, DnaK and GrpE are required for fully efficient folding. Also involved, together with DnaK and GrpE, in the DNA replication of plasmids through activation of initiation proteins. In Buchnera aphidicola subsp. Acyrthosiphon pisum (strain 5A), this protein is Chaperone protein DnaJ.